The chain runs to 68 residues: Beta-defensin 1 (68 aa).

Residues 1-21 (MRTSYLLLFTLCLLLSEIASG) form the signal peptide. Residues 22 to 32 (GNFLTGLGHRS) constitute a propeptide that is removed on maturation. 3 cysteine pairs are disulfide-bonded: Cys37–Cys66, Cys44–Cys59, and Cys49–Cys67.

It belongs to the beta-defensin family. Monomer. Homodimer.

The protein localises to the secreted. It is found in the membrane. Its function is as follows. Has bactericidal activity. May act as a ligand for C-C chemokine receptor CCR6. Positively regulates the sperm motility and bactericidal activity in a CCR6-dependent manner. Binds to CCR6 and triggers Ca2+ mobilization in the sperm which is important for its motility. The protein is Beta-defensin 1 (DEFB1) of Gorilla gorilla gorilla (Western lowland gorilla).